Reading from the N-terminus, the 336-residue chain is MASRAQNRRPAQEVDNTISYVQCDGLAAMKMVKHCHEESRSNMEVAQGALLGLVVDDRLEITNCFPFPKSSDETIDEEEYQLNMMRRLRLVNVDHFHVGWYQSADVGNFLSLPLLESQYHYQTSIEESVVVIYDTQKSARGFLTLKAYRLTPQAIAMYKEEKFTPEALRNLKVGYENLFIEIPIVIKNSALCNIMMSEMKEMVPEEEGTHFLDLGTASVLENHLRCLMDRVDELNQEANKFNKYQQTVIRQEQDKHRMLAKHAQENAARIAKGEAAIPDEEVQKLFRPLPVPSRLNPMIVSGQINTYAQHISQFCSQSLAKLYMTQALQGAKENKQ.

The MPN domain maps to 21–154; it reads VQCDGLAAMK…LKAYRLTPQA (134 aa).

Belongs to the eIF-3 subunit H family. As to quaternary structure, component of the eukaryotic translation initiation factor 3 (eIF-3) complex.

It is found in the cytoplasm. Component of the eukaryotic translation initiation factor 3 (eIF-3) complex, which is involved in protein synthesis of a specialized repertoire of mRNAs and, together with other initiation factors, stimulates binding of mRNA and methionyl-tRNAi to the 40S ribosome. The eIF-3 complex specifically targets and initiates translation of a subset of mRNAs involved in cell proliferation. This chain is Eukaryotic translation initiation factor 3 subunit H, found in Aedes aegypti (Yellowfever mosquito).